The chain runs to 372 residues: Pristinol synthase (372 aa).

Basic and acidic residues predominate over residues M1–P12. Residues M1–R23 form a disordered region. Mg(2+)-binding residues include D100 and D104. Residues D100–D104 carry the DDXXD motif motif. R197 contacts substrate. 2 residues coordinate Mg(2+): N243 and S247. Residue K250 participates in substrate binding. Residue E251 participates in Mg(2+) binding. Position 337-338 (R337–Y338) interacts with substrate. Residues G349–A372 are disordered.

This sequence belongs to the terpene synthase family. Requires Mg(2+) as cofactor.

The catalysed reaction is (2E,6E)-farnesyl diphosphate + H2O = (+)-(2S,3R,9R)-pristinol + diphosphate. The protein operates within secondary metabolite biosynthesis; terpenoid biosynthesis. Catalyzes the conversion of (2E,6E)-farnesyl diphosphate (FPP) to yield a new 5-8 bicyclic (pristinane) sesquiterpenol (+)-(2S,3R,9R)-pristinol via a 1,11-cyclization, which requires the abstraction of the pyrophosphate from FPP to yield the humulyl cation. The only accepted substrate is farnesyl diphosphate (FPP). The protein is Pristinol synthase of Streptomyces pristinaespiralis (strain ATCC 25486 / DSM 40338 / CBS 914.69 / JCM 4507 / KCC S-0507 / NBRC 13074 / NRRL 2958 / 5647).